The following is a 428-amino-acid chain: Glutamyl-tRNA reductase (428 aa).

Substrate is bound by residues 50-53 (TCNR), serine 110, 115-117 (ETQ), and glutamine 121. Cysteine 51 acts as the Nucleophile in catalysis. Position 190 to 195 (190 to 195 (GAGEMG)) interacts with NADP(+).

This sequence belongs to the glutamyl-tRNA reductase family. As to quaternary structure, homodimer.

The enzyme catalyses (S)-4-amino-5-oxopentanoate + tRNA(Glu) + NADP(+) = L-glutamyl-tRNA(Glu) + NADPH + H(+). It functions in the pathway porphyrin-containing compound metabolism; protoporphyrin-IX biosynthesis; 5-aminolevulinate from L-glutamyl-tRNA(Glu): step 1/2. Its function is as follows. Catalyzes the NADPH-dependent reduction of glutamyl-tRNA(Glu) to glutamate 1-semialdehyde (GSA). The sequence is that of Glutamyl-tRNA reductase from Campylobacter curvus (strain 525.92).